The chain runs to 381 residues: Secretion apparatus protein BsaZ (381 aa).

The next 4 helical transmembrane spans lie at 28-48 (IVAL…VDLT), 80-100 (IAAP…LVQS), 134-154 (AVKA…FADL), and 175-195 (IVLT…VLIV). The segment at 343-381 (NRGGPPREMPPEATHAPDAHGGDAASGGATSAQAGERNA) is disordered. Positions 364–381 (GDAASGGATSAQAGERNA) are enriched in low complexity.

The protein belongs to the type III secretion exporter family.

The protein resides in the cell membrane. Functionally, part of the bsa type III secretion system, is involved in the intracellular replication of invading bacteria inside the host cell. Probably necessary for the lysis of the vacuole membrane and escape into the host cell cytoplasm. The sequence is that of Secretion apparatus protein BsaZ (bsaZ) from Burkholderia thailandensis (strain ATCC 700388 / DSM 13276 / CCUG 48851 / CIP 106301 / E264).